The chain runs to 257 residues: Capsid protein (257 aa).

Positions 3–20 (KRNYDTAFSTPMSNVRRR) match the Bipartite nuclear localization signal motif. Residues 41–55 (KRRRWTNRPMWRKPR) carry the Nuclear localization signal motif. A zinc finger lies at 69–86 (CEGPCKVQSFEAKHDISH). A Nuclear export signal motif is present at residues 102–123 (ITHRVGKRFCVKSIWVTGKIWM). The short motif at 201 to 248 (SKFYRVNNYVVYNHQEAAKYENHTENALLLYMACTHASNPVYATLKIR) is the Bipartite nuclear localization signal element.

Belongs to the geminiviridae capsid protein family. In terms of assembly, homomultimer. Binds to single-stranded and double-stranded viral DNA. Interacts (via nuclear localization signals) with host importin alpha-1a.

The protein resides in the virion. The protein localises to the host nucleus. Encapsidates the viral DNA into characteristic twinned ('geminate') particles. Binds the genomic viral ssDNA and shuttles it into and out of the cell nucleus. The CP of bipartite geminiviruses is not required for cell-to-cell or systemic movement. The sequence is that of Capsid protein from Glycine max (Soybean).